We begin with the raw amino-acid sequence, 764 residues long: Thyrotropin receptor (764 aa).

The signal sequence occupies residues 1-21; sequence MRPGSLLLLVLLLALSRSLRG. Topologically, residues 22 to 413 are extracellular; sequence KECASPPCEC…EFNPCEDIMG (392 aa). A disulfide bridge connects residues Cys31 and Cys41. 2 N-linked (GlcNAc...) asparagine glycosylation sites follow: Asn77 and Asn99. LRR repeat units lie at residues 100 to 124, 125 to 150, 151 to 174, 176 to 199, 200 to 223, 225 to 248, and 264 to 288; these read LSKMTHIEIRNTRSLTYIDPDALTE, LPLLKFLGIFNTGLRIFPDLTKIYST, DIFFILEITDNPYMTSVPENAFQG, CNETLTLKLYNNGFTSVQGHAFNG, TKLDAVYLNKNKYLTAIDNDAFGG, YSGPTLLDVSSTSVTALPSKGLEH, and PLSLSFLHLTRADLSYPSHCCAFKN. 2 N-linked (GlcNAc...) asparagine glycosylation sites follow: Asn177 and Asn198. Residue Asn302 is glycosylated (N-linked (GlcNAc...) asparagine). Tyr385 bears the Sulfotyrosine mark. The helical transmembrane segment at 414–441 threads the bilayer; sequence YRFLRIVVWFVSLLALLGNIFVLLILLT. At 442–450 the chain is on the cytoplasmic side; sequence SHYKLTVPR. The chain crosses the membrane as a helical span at residues 451-473; that stretch reads FLMCNLAFADFCMGVYLLLIASV. Residues 474–494 lie on the Extracellular side of the membrane; the sequence is DLYTHSEYYNHAIDWQTGPGC. A disulfide bridge connects residues Cys494 and Cys569. The helical transmembrane segment at 495 to 517 threads the bilayer; the sequence is NTAGFFTVFASELSVYTLTVITL. The Cytoplasmic portion of the chain corresponds to 518-537; the sequence is ERWYAITFAMRLDRKIRLRH. Residues 538-560 traverse the membrane as a helical segment; sequence AYTIMAGGWVSCFLLALLPMVGI. The Extracellular portion of the chain corresponds to 561–580; sequence SSYAKVSICLPMDTDTPLAL. A helical transmembrane segment spans residues 581-602; sequence AYIVLVLLLNVVAFVVVCSCYV. The Cytoplasmic segment spans residues 603-625; the sequence is KIYITVRNPQYNPRDKDTKIAKR. A helical transmembrane segment spans residues 626–649; the sequence is MAVLIFTDFMCMAPISFYALSALM. Over 650 to 660 the chain is Extracellular; the sequence is NKPLITVTNSK. The helical transmembrane segment at 661–682 threads the bilayer; sequence ILLVLFYPLNSCANPFLYAIFT. Residues 683-764 are Cytoplasmic-facing; the sequence is KAFQRDVFIL…ISEEYKQTAL (82 aa). The PDZ-binding signature appears at 762-764; the sequence is TAL.

This sequence belongs to the G-protein coupled receptor 1 family. FSH/LSH/TSH subfamily. As to quaternary structure, interacts with heterodimer GPHA2:GPHB5; this interaction stimulates cAMP production. Interacts (via the PDZ-binding motif) with SCRIB; regulates TSHR trafficking and function. Post-translationally, glycosylated. In terms of processing, sulfated. Sulfation on Tyr-385 plays a role in thyrotropin receptor binding and activation.

It localises to the cell membrane. It is found in the basolateral cell membrane. Functionally, receptor for the thyroid-stimulating hormone (TSH) or thyrotropin. Also acts as a receptor for the heterodimeric glycoprotein hormone (GPHA2:GPHB5) or thyrostimulin. The activity of this receptor is mediated by G proteins which activate adenylate cyclase. Plays a central role in controlling thyroid cell metabolism. The polypeptide is Thyrotropin receptor (Tshr) (Mus musculus (Mouse)).